A 252-amino-acid polypeptide reads, in one-letter code: Ureidoacrylate amidohydrolase RutB (252 aa).

Residues 1-14 (MSTPARNTTLTSNT) show a composition bias toward polar residues. A disordered region spans residues 1 to 31 (MSTPARNTTLTSNTPAGAPRLPGAPAPQVLP). Low complexity predominate over residues 15-27 (PAGAPRLPGAPAP). D50 serves as the catalytic Proton acceptor. Residue K159 is part of the active site. C192 functions as the Nucleophile in the catalytic mechanism.

Belongs to the isochorismatase family. RutB subfamily.

The enzyme catalyses (Z)-3-ureidoacrylate + H2O + H(+) = (Z)-3-aminoacrylate + NH4(+) + CO2. It carries out the reaction (Z)-3-ureidoacrylate + H2O = (Z)-3-aminoacrylate + carbamate + H(+). The catalysed reaction is (Z)-2-methylureidoacrylate + H2O + H(+) = (Z)-2-methylaminoacrylate + NH4(+) + CO2. Functionally, hydrolyzes ureidoacrylate to form aminoacrylate and carbamate. The carbamate hydrolyzes spontaneously, thereby releasing one of the nitrogen atoms of the pyrimidine ring as ammonia and one of its carbon atoms as CO2. The sequence is that of Ureidoacrylate amidohydrolase RutB from Variovorax paradoxus (strain S110).